Reading from the N-terminus, the 83-residue chain is Cytochrome c oxidase subunit 7A2, mitochondrial (83 aa).

The N-terminal 23 residues, 1–23 (MLRNLLALRQIAKRTISTSSRRQ), are a transit peptide targeting the mitochondrion. The Mitochondrial matrix segment spans residues 24 to 48 (FENKVPEKQKLFQEDNGIPVHLKGG). K33 carries the N6-acetyllysine modification. The chain crosses the membrane as a helical span at residues 49-77 (IADALLYRATLILTVGGTAYAMYELAVAS). The Mitochondrial intermembrane segment spans residues 78-83 (FPKKQD).

This sequence belongs to the cytochrome c oxidase VIIa family. Component of the cytochrome c oxidase (complex IV, CIV), a multisubunit enzyme composed of 14 subunits. The complex is composed of a catalytic core of 3 subunits MT-CO1, MT-CO2 and MT-CO3, encoded in the mitochondrial DNA, and 11 supernumerary subunits COX4I1 (or COX4I2), COX5A, COX5B, COX6A2 (or COX6A1), COX6B1 (or COX6B2), COX6C, COX7A1 (or COX7A2), COX7B, COX7C, COX8B and NDUFA4, which are encoded in the nuclear genome. The complex exists as a monomer or a dimer and forms supercomplexes (SCs) in the inner mitochondrial membrane with NADH-ubiquinone oxidoreductase (complex I, CI) and ubiquinol-cytochrome c oxidoreductase (cytochrome b-c1 complex, complex III, CIII), resulting in different assemblies (supercomplex SCI(1)III(2)IV(1) and megacomplex MCI(2)III(2)IV(2)). Interacts with PET100.

The protein resides in the mitochondrion inner membrane. The protein operates within energy metabolism; oxidative phosphorylation. Component of the cytochrome c oxidase, the last enzyme in the mitochondrial electron transport chain which drives oxidative phosphorylation. The respiratory chain contains 3 multisubunit complexes succinate dehydrogenase (complex II, CII), ubiquinol-cytochrome c oxidoreductase (cytochrome b-c1 complex, complex III, CIII) and cytochrome c oxidase (complex IV, CIV), that cooperate to transfer electrons derived from NADH and succinate to molecular oxygen, creating an electrochemical gradient over the inner membrane that drives transmembrane transport and the ATP synthase. Cytochrome c oxidase is the component of the respiratory chain that catalyzes the reduction of oxygen to water. Electrons originating from reduced cytochrome c in the intermembrane space (IMS) are transferred via the dinuclear copper A center (CU(A)) of subunit 2 and heme A of subunit 1 to the active site in subunit 1, a binuclear center (BNC) formed by heme A3 and copper B (CU(B)). The BNC reduces molecular oxygen to 2 water molecules using 4 electrons from cytochrome c in the IMS and 4 protons from the mitochondrial matrix. The protein is Cytochrome c oxidase subunit 7A2, mitochondrial (COX7A2) of Bos taurus (Bovine).